A 463-amino-acid chain; its full sequence is Bifunctional protein HldE (463 aa).

The segment at 1 to 313 is ribokinase; sequence MTGPMAVRTD…RALAALPDTD (313 aa). Asp258 is an active-site residue. Residues 331-463 form a cytidylyltransferase region; it reads AAGGCFDLLH…LLARAAEGAR (133 aa).

This sequence in the N-terminal section; belongs to the carbohydrate kinase PfkB family. In the C-terminal section; belongs to the cytidylyltransferase family. Homodimer.

The enzyme catalyses D-glycero-beta-D-manno-heptose 7-phosphate + ATP = D-glycero-beta-D-manno-heptose 1,7-bisphosphate + ADP + H(+). It catalyses the reaction D-glycero-beta-D-manno-heptose 1-phosphate + ATP + H(+) = ADP-D-glycero-beta-D-manno-heptose + diphosphate. It functions in the pathway nucleotide-sugar biosynthesis; ADP-L-glycero-beta-D-manno-heptose biosynthesis; ADP-L-glycero-beta-D-manno-heptose from D-glycero-beta-D-manno-heptose 7-phosphate: step 1/4. Its pathway is nucleotide-sugar biosynthesis; ADP-L-glycero-beta-D-manno-heptose biosynthesis; ADP-L-glycero-beta-D-manno-heptose from D-glycero-beta-D-manno-heptose 7-phosphate: step 3/4. Its function is as follows. Catalyzes the phosphorylation of D-glycero-D-manno-heptose 7-phosphate at the C-1 position to selectively form D-glycero-beta-D-manno-heptose-1,7-bisphosphate. Functionally, catalyzes the ADP transfer from ATP to D-glycero-beta-D-manno-heptose 1-phosphate, yielding ADP-D-glycero-beta-D-manno-heptose. This Streptomyces coelicolor (strain ATCC BAA-471 / A3(2) / M145) protein is Bifunctional protein HldE.